The primary structure comprises 736 residues: Melanotransferrin (736 aa).

An N-terminal signal peptide occupies residues 1-19 (MRCRSAAMWIFLALRTALG). Transferrin-like domains lie at 23 to 357 (VRWC…GLLC) and 366 to 706 (LRWC…GMQS). 2 disulfides stabilise this stretch: C26–C63 and C36–C54. Fe(3+)-binding residues include D78 and Y107. Residue N118 is glycosylated (N-linked (GlcNAc...) asparagine). Intrachain disulfides connect C130/C216, C172/C189, C186/C199, and C257/C271. Residue T132 participates in hydrogencarbonate binding. Residue N135 is glycosylated (N-linked (GlcNAc...) asparagine). Hydrogencarbonate-binding residues include R136, V138, and G139. Y210 is a binding site for Fe(3+). The Fe(3+) site is built by H279 and Y451. N515 is a glycosylation site (N-linked (GlcNAc...) asparagine). Fe(3+) is bound at residue H625. G711 carries the GPI-anchor amidated glycine lipid modification. A propeptide spans 712–736 (AAVGAPGASLLPLLPLAVGLLLSSL) (removed in mature form).

Belongs to the transferrin family.

The protein localises to the cell membrane. Functionally, involved in iron cellular uptake. Seems to be internalized and then recycled back to the cell membrane. Binds a single atom of iron per subunit. Could also bind zinc. The polypeptide is Melanotransferrin (Oryctolagus cuniculus (Rabbit)).